The chain runs to 347 residues: UDP-N-acetylglucosamine--N-acetylmuramyl-(pentapeptide) pyrophosphoryl-undecaprenol N-acetylglucosamine transferase (347 aa).

UDP-N-acetyl-alpha-D-glucosamine contacts are provided by residues 11–13, Asn-122, Arg-163, Ser-189, and Gln-279; that span reads TGG.

It belongs to the glycosyltransferase 28 family. MurG subfamily.

It is found in the cell inner membrane. The enzyme catalyses di-trans,octa-cis-undecaprenyl diphospho-N-acetyl-alpha-D-muramoyl-L-alanyl-D-glutamyl-meso-2,6-diaminopimeloyl-D-alanyl-D-alanine + UDP-N-acetyl-alpha-D-glucosamine = di-trans,octa-cis-undecaprenyl diphospho-[N-acetyl-alpha-D-glucosaminyl-(1-&gt;4)]-N-acetyl-alpha-D-muramoyl-L-alanyl-D-glutamyl-meso-2,6-diaminopimeloyl-D-alanyl-D-alanine + UDP + H(+). The protein operates within cell wall biogenesis; peptidoglycan biosynthesis. Its function is as follows. Cell wall formation. Catalyzes the transfer of a GlcNAc subunit on undecaprenyl-pyrophosphoryl-MurNAc-pentapeptide (lipid intermediate I) to form undecaprenyl-pyrophosphoryl-MurNAc-(pentapeptide)GlcNAc (lipid intermediate II). The sequence is that of UDP-N-acetylglucosamine--N-acetylmuramyl-(pentapeptide) pyrophosphoryl-undecaprenol N-acetylglucosamine transferase from Sulfurihydrogenibium sp. (strain YO3AOP1).